The sequence spans 430 residues: Adenylosuccinate synthetase (430 aa).

Residues 13–19 (GDEGKGK) and 41–43 (GHT) each bind GTP. Aspartate 14 (proton acceptor) is an active-site residue. 2 residues coordinate Mg(2+): aspartate 14 and glycine 41. Residues 14 to 17 (DEGK), 39 to 42 (NAGH), threonine 130, arginine 144, glutamine 225, threonine 240, and arginine 304 contribute to the IMP site. Histidine 42 functions as the Proton donor in the catalytic mechanism. 300-306 (ASTGRPR) is a substrate binding site. GTP is bound by residues arginine 306, 332–334 (KLD), and 414–416 (STG).

Belongs to the adenylosuccinate synthetase family. As to quaternary structure, homodimer. Requires Mg(2+) as cofactor.

The protein localises to the cytoplasm. The enzyme catalyses IMP + L-aspartate + GTP = N(6)-(1,2-dicarboxyethyl)-AMP + GDP + phosphate + 2 H(+). It functions in the pathway purine metabolism; AMP biosynthesis via de novo pathway; AMP from IMP: step 1/2. Functionally, plays an important role in the de novo pathway of purine nucleotide biosynthesis. Catalyzes the first committed step in the biosynthesis of AMP from IMP. The protein is Adenylosuccinate synthetase of Xylella fastidiosa (strain 9a5c).